A 105-amino-acid polypeptide reads, in one-letter code: ESAT-6-like protein EsxU (105 aa).

It belongs to the WXG100 family. CFP-10 subfamily. As to quaternary structure, forms a tight 1:1 complex with EsxT. Complex formation results in induction of alpha-helical conformation and stability against chemical denaturation.

It is found in the secreted. In Mycobacterium tuberculosis (strain ATCC 25618 / H37Rv), this protein is ESAT-6-like protein EsxU.